A 504-amino-acid chain; its full sequence is Maturase K (504 aa).

This sequence belongs to the intron maturase 2 family. MatK subfamily.

It is found in the plastid. The protein localises to the chloroplast. Usually encoded in the trnK tRNA gene intron. Probably assists in splicing its own and other chloroplast group II introns. The polypeptide is Maturase K (Hamamelis japonica (Japanese witch hazel)).